We begin with the raw amino-acid sequence, 621 residues long: Chaperone protein HscA homolog (621 aa).

Belongs to the heat shock protein 70 family.

Its function is as follows. Chaperone involved in the maturation of iron-sulfur cluster-containing proteins. Has a low intrinsic ATPase activity which is markedly stimulated by HscB. The protein is Chaperone protein HscA homolog of Polynucleobacter asymbioticus (strain DSM 18221 / CIP 109841 / QLW-P1DMWA-1) (Polynucleobacter necessarius subsp. asymbioticus).